Here is a 513-residue protein sequence, read N- to C-terminus: Na(+)/H(+) antiporter NhaB (513 aa).

The next 12 membrane-spanning stretches (helical) occupy residues 23 to 43, 52 to 72, 97 to 117, 120 to 140, 144 to 164, 202 to 222, 238 to 258, 303 to 323, 348 to 368, 391 to 411, 447 to 467, and 475 to 495; these read LALIIFLIVNPLIFLISPFVA, IFTLAMALKCYPLLPGGLLAI, LLLMFMVAGIYFMKQLLLFIF, LLLSIRSKMLLSLSFCVAAAF, FLDALTVVAVVISVAVGFYGI, LMMHAGVGTALGGVMTMVGEP, FFLRMSPVTVPVLICGLLTCL, AIIGVWLVTALALHLAEVGLI, TESLPFTALLTVFFSVVAVII, LFYIFNGLLSSISDNVFVGTI, ATPNGQAAFLFLLTSALAPLI, and VWMALPYTLVLTLVGLLCVEF.

It belongs to the NhaB Na(+)/H(+) (TC 2.A.34) antiporter family.

The protein resides in the cell inner membrane. It catalyses the reaction 2 Na(+)(in) + 3 H(+)(out) = 2 Na(+)(out) + 3 H(+)(in). Na(+)/H(+) antiporter that extrudes sodium in exchange for external protons. This chain is Na(+)/H(+) antiporter NhaB, found in Escherichia coli O6:K15:H31 (strain 536 / UPEC).